Reading from the N-terminus, the 379-residue chain is Cathepsin B-like protease 1 (379 aa).

The signal sequence occupies residues 1 to 30; the sequence is MADSCCIRLHLLASVFLLLFSSFNLQGIAA. Residues 31–102 constitute a propeptide, activation peptide; it reads ENLSKQKLTS…PIVRHDLSLK (72 aa). N-linked (GlcNAc...) asparagine glycosylation is found at Asn-32 and Asn-69. Cystine bridges form between Cys-116–Cys-165, Cys-148–Cys-191, Cys-182–Cys-236, Cys-183–Cys-187, Cys-213–Cys-240, and Cys-222–Cys-227. The active site involves Cys-151. Asn-171 carries an N-linked (GlcNAc...) asparagine glycan. Active-site residues include His-306 and Asn-327. N-linked (GlcNAc...) asparagine glycosylation occurs at Asn-330. Positions 363-379 are cleaved as a propeptide — removed in mature form; that stretch reads NVFKGITTSDDLLVSSV.

The protein belongs to the peptidase C1 family.

In terms of biological role, thiol protease that plays a central role in plant programmed cell death (PCD). In addition to its role in protein degradation, may cleave and/or degrade a number of target proteins, activating signaling towards PCD. Contributes to the increase of caspase-3-like activity after UV-C-induced PCD and is required for abiotic stress-induced PCD. Functions redundantly with CATHB2 and CATHB3 in basal defense and distinct forms of plant programmed cell death (PCD). Participates in the establishment of basal resistance against the bacterial pathogen Pseudomonase syringae pv. tomato DC3000. Required for full levels of PCD during resistance (R) gene-mediated hypersensitive response (HR). Involved in the regulation of senescence, a developmental form of PCD in plants. This chain is Cathepsin B-like protease 1, found in Arabidopsis thaliana (Mouse-ear cress).